The primary structure comprises 461 residues: GTPase Der (461 aa).

2 consecutive EngA-type G domains span residues 9–171 (KTIA…NLNK) and 200–371 (IQVG…ECFS). Residues 15 to 22 (GQPNVGKS), 62 to 66 (DTGGM), 123 to 126 (NKID), 206 to 213 (GRVNVGKS), 253 to 257 (DTAGI), and 317 to 320 (NKWD) contribute to the GTP site. Residues 372-456 (KRIPTSLLNS…PLILNAKDKK (85 aa)) enclose the KH-like domain.

It belongs to the TRAFAC class TrmE-Era-EngA-EngB-Septin-like GTPase superfamily. EngA (Der) GTPase family. In terms of assembly, associates with the 50S ribosomal subunit.

In terms of biological role, GTPase that plays an essential role in the late steps of ribosome biogenesis. The polypeptide is GTPase Der (Helicobacter pylori (strain HPAG1)).